Consider the following 526-residue polypeptide: Seipin-2 (526 aa).

The interval 33 to 77 is disordered; the sequence is PIRSNSHQPSSLLRRRKSAHRRDLISSDIETEPSSSSDGFDVGEK. Over residues 58–70 the composition is skewed to low complexity; that stretch reads SSDIETEPSSSSD. 4 consecutive transmembrane segments (helical) span residues 195-215, 224-243, 258-278, and 483-503; these read SLLT…FDPF, FLMA…MNPF, FGWG…LLVS, and LFVW…LVCC.

Belongs to the seipin family. In terms of tissue distribution, expressed in seeds, seedlings, leaves, stems and roots. Not detected in flowers.

Its subcellular location is the endoplasmic reticulum membrane. In terms of biological role, involved in lipid metabolism and lipid droplet (LD) morphology, number, and size. Supports the formation of small-sized LDs and modulates triacylglycerol accumulation. Induces probably a reorganization of the endoplasmic reticulum into LD-forming domains. The sequence is that of Seipin-2 from Arabidopsis thaliana (Mouse-ear cress).